The sequence spans 67 residues: Surface composition regulator (67 aa).

Belongs to the GlgS family.

Functionally, major determinant of cell surface composition. Negatively regulates motility, adhesion and synthesis of biofilm exopolysaccharides. The protein is Surface composition regulator of Salmonella paratyphi A (strain ATCC 9150 / SARB42).